The sequence spans 108 residues: Protein FMC1 homolog (108 aa).

Belongs to the FMC1 family.

The polypeptide is Protein FMC1 homolog (Caenorhabditis elegans).